The primary structure comprises 419 residues: S-adenosylmethionine synthase (419 aa).

His15 contacts ATP. Residue Asp17 participates in Mg(2+) binding. Glu43 contributes to the K(+) binding site. L-methionine contacts are provided by Glu56 and Gln100. Residues 100–110 are flexible loop; it reads QSPDIAQGVDE. ATP is bound by residues 171 to 173, 248 to 249, Asp257, 263 to 264, Ala280, and Lys284; these read DGK, KF, and RK. L-methionine is bound at residue Asp257. Residue Lys288 coordinates L-methionine.

The protein belongs to the AdoMet synthase family. Homotetramer; dimer of dimers. Requires Mg(2+) as cofactor. It depends on K(+) as a cofactor.

The protein resides in the cytoplasm. It carries out the reaction L-methionine + ATP + H2O = S-adenosyl-L-methionine + phosphate + diphosphate. It participates in amino-acid biosynthesis; S-adenosyl-L-methionine biosynthesis; S-adenosyl-L-methionine from L-methionine: step 1/1. Its function is as follows. Catalyzes the formation of S-adenosylmethionine (AdoMet) from methionine and ATP. The overall synthetic reaction is composed of two sequential steps, AdoMet formation and the subsequent tripolyphosphate hydrolysis which occurs prior to release of AdoMet from the enzyme. The polypeptide is S-adenosylmethionine synthase (Synechococcus sp. (strain WH7803)).